The following is a 311-amino-acid chain: Retinol dehydrogenase 8 (311 aa).

NADP(+) is bound at residue 9-18; sequence LISGCSSGIG. The next 3 membrane-spanning stretches (helical) occupy residues 86-106, 137-157, and 169-189; these read VLVN…SLAA, IVVI…VYAA, and LAIQ…GPVV. Ser142 contacts substrate. Residue Tyr155 is the Proton acceptor of the active site.

The protein belongs to the short-chain dehydrogenases/reductases (SDR) family. In terms of tissue distribution, detected in photoreceptor outer segments in the retina (at protein level).

It is found in the membrane. The catalysed reaction is all-trans-retinol + NADP(+) = all-trans-retinal + NADPH + H(+). Its function is as follows. Retinol dehydrogenase with a clear preference for NADP. Converts all-trans-retinal to all-trans-retinol. May play a role in the regeneration of visual pigment at high light intensity. The chain is Retinol dehydrogenase 8 (RDH8) from Homo sapiens (Human).